Here is a 98-residue protein sequence, read N- to C-terminus: Large ribosomal subunit protein uL23 (98 aa).

This sequence belongs to the universal ribosomal protein uL23 family. As to quaternary structure, part of the 50S ribosomal subunit. Contacts protein L29, and trigger factor when it is bound to the ribosome.

Its function is as follows. One of the early assembly proteins it binds 23S rRNA. One of the proteins that surrounds the polypeptide exit tunnel on the outside of the ribosome. Forms the main docking site for trigger factor binding to the ribosome. The protein is Large ribosomal subunit protein uL23 of Limosilactobacillus reuteri (strain DSM 20016) (Lactobacillus reuteri).